Consider the following 214-residue polypeptide: MISFLRGTVAHVGLSSAVIDLNGAGMSVNATPQTLSGLRTGEEGKLFTSLIVREDSLTLFGFSSDDEREVFDVLLSVSGVGPRLALAVLAVHDPEAIRVAAHTGDGKAFTKVPGIGPKVAGRIVLELAGKLVPHGTGAAAAPAAAASAPWKPQVVAAMTSLGWSEKDATSSIDKALSDSPELEAGGQVAEILRATLRWLGQDGARAGNRVGSRG.

Residues 1–63 (MISFLRGTVA…EDSLTLFGFS (63 aa)) are domain I. The tract at residues 64 to 142 (SDDEREVFDV…PHGTGAAAAP (79 aa)) is domain II. The segment at 143–153 (AAAASAPWKPQ) is flexible linker. The tract at residues 153-214 (QVVAAMTSLG…RAGNRVGSRG (62 aa)) is domain III.

This sequence belongs to the RuvA family. As to quaternary structure, homotetramer. Forms an RuvA(8)-RuvB(12)-Holliday junction (HJ) complex. HJ DNA is sandwiched between 2 RuvA tetramers; dsDNA enters through RuvA and exits via RuvB. An RuvB hexamer assembles on each DNA strand where it exits the tetramer. Each RuvB hexamer is contacted by two RuvA subunits (via domain III) on 2 adjacent RuvB subunits; this complex drives branch migration. In the full resolvosome a probable DNA-RuvA(4)-RuvB(12)-RuvC(2) complex forms which resolves the HJ.

The protein resides in the cytoplasm. Functionally, the RuvA-RuvB-RuvC complex processes Holliday junction (HJ) DNA during genetic recombination and DNA repair, while the RuvA-RuvB complex plays an important role in the rescue of blocked DNA replication forks via replication fork reversal (RFR). RuvA specifically binds to HJ cruciform DNA, conferring on it an open structure. The RuvB hexamer acts as an ATP-dependent pump, pulling dsDNA into and through the RuvAB complex. HJ branch migration allows RuvC to scan DNA until it finds its consensus sequence, where it cleaves and resolves the cruciform DNA. The polypeptide is Holliday junction branch migration complex subunit RuvA (Arthrobacter sp. (strain FB24)).